A 329-amino-acid chain; its full sequence is Phosphate acyltransferase (329 aa).

The protein belongs to the PlsX family. In terms of assembly, homodimer. Probably interacts with PlsY.

It is found in the cytoplasm. It catalyses the reaction a fatty acyl-[ACP] + phosphate = an acyl phosphate + holo-[ACP]. Its pathway is lipid metabolism; phospholipid metabolism. Catalyzes the reversible formation of acyl-phosphate (acyl-PO(4)) from acyl-[acyl-carrier-protein] (acyl-ACP). This enzyme utilizes acyl-ACP as fatty acyl donor, but not acyl-CoA. This Shouchella clausii (strain KSM-K16) (Alkalihalobacillus clausii) protein is Phosphate acyltransferase.